A 38-amino-acid chain; its full sequence is MKVQASVKVLCRSCKIIKRNNVVRVICSNDPKHKQRQG.

This sequence belongs to the bacterial ribosomal protein bL36 family.

In Buchnera aphidicola subsp. Acyrthosiphon pisum (strain 5A), this protein is Large ribosomal subunit protein bL36.